The chain runs to 454 residues: Bifunctional protein GlmU (454 aa).

A pyrophosphorylase region spans residues 1-228 (MTLPLHVVIL…PQHVEGANDP (228 aa)). UDP-N-acetyl-alpha-D-glucosamine contacts are provided by residues 10-13 (LAAG), Lys24, Gln76, 81-82 (GT), 103-105 (YGD), Gly138, Glu153, Asn168, and Asn226. Residue Asp105 coordinates Mg(2+). Asn226 lines the Mg(2+) pocket. A linker region spans residues 229–249 (WQLAQLERAWQLRAARTLCLQ). The N-acetyltransferase stretch occupies residues 250 to 454 (GVRMADPARV…IEGWKRPTKK (205 aa)). UDP-N-acetyl-alpha-D-glucosamine-binding residues include Arg332 and Lys350. His362 acts as the Proton acceptor in catalysis. UDP-N-acetyl-alpha-D-glucosamine-binding residues include Tyr365 and Asn376. Acetyl-CoA contacts are provided by residues Ala379, 385–386 (NY), Ser404, Ala422, and Arg439.

It in the N-terminal section; belongs to the N-acetylglucosamine-1-phosphate uridyltransferase family. This sequence in the C-terminal section; belongs to the transferase hexapeptide repeat family. Homotrimer. Requires Mg(2+) as cofactor.

The protein localises to the cytoplasm. The enzyme catalyses alpha-D-glucosamine 1-phosphate + acetyl-CoA = N-acetyl-alpha-D-glucosamine 1-phosphate + CoA + H(+). It carries out the reaction N-acetyl-alpha-D-glucosamine 1-phosphate + UTP + H(+) = UDP-N-acetyl-alpha-D-glucosamine + diphosphate. It participates in nucleotide-sugar biosynthesis; UDP-N-acetyl-alpha-D-glucosamine biosynthesis; N-acetyl-alpha-D-glucosamine 1-phosphate from alpha-D-glucosamine 6-phosphate (route II): step 2/2. It functions in the pathway nucleotide-sugar biosynthesis; UDP-N-acetyl-alpha-D-glucosamine biosynthesis; UDP-N-acetyl-alpha-D-glucosamine from N-acetyl-alpha-D-glucosamine 1-phosphate: step 1/1. The protein operates within bacterial outer membrane biogenesis; LPS lipid A biosynthesis. Its function is as follows. Catalyzes the last two sequential reactions in the de novo biosynthetic pathway for UDP-N-acetylglucosamine (UDP-GlcNAc). The C-terminal domain catalyzes the transfer of acetyl group from acetyl coenzyme A to glucosamine-1-phosphate (GlcN-1-P) to produce N-acetylglucosamine-1-phosphate (GlcNAc-1-P), which is converted into UDP-GlcNAc by the transfer of uridine 5-monophosphate (from uridine 5-triphosphate), a reaction catalyzed by the N-terminal domain. The sequence is that of Bifunctional protein GlmU from Xanthomonas euvesicatoria pv. vesicatoria (strain 85-10) (Xanthomonas campestris pv. vesicatoria).